The chain runs to 525 residues: Peptide chain release factor 3 (525 aa).

A tr-type G domain is found at 11-279 (NNRRTFAIIS…AYLKYAPKPA (269 aa)). Residues 20–27 (SHPDAGKT), 88–92 (DTPGH), and 142–145 (NKLD) each bind GTP.

The protein belongs to the TRAFAC class translation factor GTPase superfamily. Classic translation factor GTPase family. PrfC subfamily.

It localises to the cytoplasm. In terms of biological role, increases the formation of ribosomal termination complexes and stimulates activities of RF-1 and RF-2. It binds guanine nucleotides and has strong preference for UGA stop codons. It may interact directly with the ribosome. The stimulation of RF-1 and RF-2 is significantly reduced by GTP and GDP, but not by GMP. The polypeptide is Peptide chain release factor 3 (Ligilactobacillus salivarius (strain UCC118) (Lactobacillus salivarius)).